Here is a 179-residue protein sequence, read N- to C-terminus: MTDTETRLKALMLRGLDGDTAAYREGLALLGVRLRAYFMRRMSGAPGDVEDLVQETLLAVHLKRSTWDSAQSFTAWAHAVARYKLIDHWRRRKIRQTLPLEDHVDFLADDAPDPGVALELDRALASLPQRQRMLVSDVKLTGLSLAEAGARAGISEGAAKVALHRALKALAERMRRADG.

The tract at residues 33-93 (RLRAYFMRRM…KLIDHWRRRK (61 aa)) is sigma-70 factor domain-2. Residues 51–64 (DLVQETLLAVHLKR) carry the Polymerase core binding motif. The interval 123–170 (ALASLPQRQRMLVSDVKLTGLSLAEAGARAGISEGAAKVALHRALKAL) is sigma-70 factor domain-4. The segment at residues 145–164 (LAEAGARAGISEGAAKVALH) is a DNA-binding region (H-T-H motif).

It belongs to the sigma-70 factor family. ECF subfamily.

The protein resides in the cytoplasm. Functionally, sigma factors are initiation factors that promote the attachment of RNA polymerase to specific initiation sites and are then released. Extracytoplasmic function (ECF) sigma factors are held in an inactive form by a cognate anti-sigma factor (NrsF in this case) until they are released. Up-regulates expression of 4 operons (sigF-nrsF, CCNA_02834, CCNA_03001 to CCNA_02999 and CCNA_03363 to CCNA_03366) in response to potassium dichromate (K(2)Cr(2)O(7)) or cadmium chloride (CdCl(2)). Overexpression of sigF leads to higher expression of its regulon. The polypeptide is ECF RNA polymerase sigma factor SigF (Caulobacter vibrioides (strain NA1000 / CB15N) (Caulobacter crescentus)).